The sequence spans 1011 residues: RAS protein activator like-3 (1011 aa).

Residues 1–38 (MDPPSPSRTSQTQPTATSPLTSYRWHTGGGGEKAAGGF) form a disordered region. Positions 7–22 (SRTSQTQPTATSPLTS) are enriched in low complexity. 2 positions are modified to phosphoserine: S18 and S51. Disordered stretches follow at residues 52–136 (HQEP…PVWD), 151–197 (GGEE…GPNQ), and 209–230 (KEKKKARLEPRDGPPSALGSRE). Residues 81–95 (SRLRLSKALWGRHKN) are compositionally biased toward basic residues. A compositionally biased stretch (acidic residues) spans 100 to 117 (PDPEPEQEAPELEPEPEL). Over residues 118–131 (EPPTPQIPEAPTPN) the composition is skewed to pro residues. 4 positions are modified to phosphoserine: S164, S166, S167, and S170. The span at 179–190 (RDPDRMPGKTEP) shows a compositional bias: basic and acidic residues. Residues 197-293 (QVHNVRGLLK…WIEDLRRQFQ (97 aa)) enclose the PH domain. 3 positions are modified to phosphoserine: S224, S228, and S231. T234 bears the Phosphothreonine mark. The C2 domain occupies 284 to 404 (WIEDLRRQFQ…APAAGLERWF (121 aa)). Residues 474–682 (GRAQALVTDL…PAMQCFLDQV (209 aa)) enclose the Ras-GAP domain. Disordered regions lie at residues 756–885 (QVHS…LGTH) and 987–1011 (LSPRTRGSWSQPQPLKAPCLNGDTT). Residues S787 and S790 each carry the phosphoserine modification. A compositionally biased stretch (basic and acidic residues) spans 792–808 (RRSESWARPRPDEERPL). Polar residues-rich tracts occupy residues 871–882 (QMDQPQDRNQAL) and 987–999 (LSPRTRGSWSQPQ). A coiled-coil region spans residues 888–988 (VNKLAELQCE…RDAVQSLQLS (101 aa)). Position 988 is a phosphoserine (S988).

As to expression, predominantly expressed in cells of hematopoietic lineages.

It is found in the cytoplasm. The protein resides in the cell cortex. Its function is as follows. Functions as a Ras GTPase-activating protein. Plays an important role in the expansion and functions of natural killer T (NKT) cells in the liver by negatively regulating RAS activity and the down-stream ERK signaling pathway. The sequence is that of RAS protein activator like-3 (RASAL3) from Homo sapiens (Human).